We begin with the raw amino-acid sequence, 131 residues long: Small ribosomal subunit protein uS8 (131 aa).

This sequence belongs to the universal ribosomal protein uS8 family. As to quaternary structure, part of the 30S ribosomal subunit. Contacts proteins S5 and S12.

In terms of biological role, one of the primary rRNA binding proteins, it binds directly to 16S rRNA central domain where it helps coordinate assembly of the platform of the 30S subunit. This is Small ribosomal subunit protein uS8 from Acholeplasma laidlawii (strain PG-8A).